Here is a 293-residue protein sequence, read N- to C-terminus: NAD kinase (293 aa).

Asp-68 serves as the catalytic Proton acceptor. Residues 68–69 (DG), 142–143 (ND), Arg-153, Asp-172, and 183–188 (TAYSLS) contribute to the NAD(+) site.

It belongs to the NAD kinase family. It depends on a divalent metal cation as a cofactor.

It localises to the cytoplasm. It catalyses the reaction NAD(+) + ATP = ADP + NADP(+) + H(+). Involved in the regulation of the intracellular balance of NAD and NADP, and is a key enzyme in the biosynthesis of NADP. Catalyzes specifically the phosphorylation on 2'-hydroxyl of the adenosine moiety of NAD to yield NADP. In Lachnospira eligens (strain ATCC 27750 / DSM 3376 / VPI C15-48 / C15-B4) (Eubacterium eligens), this protein is NAD kinase.